The following is a 517-amino-acid chain: RNA-binding region-containing protein 3 (517 aa).

Positions 1-26 (MAAPEQPLAISRGCTSSSSLSPPRGD) are disordered. Positions 1–257 (MAAPEQPLAI…STDDEDRQRM (257 aa)) are necessary for interaction with PDCD7. The residue at position 21 (serine 21) is a Phosphoserine. The region spanning 27–102 (RTLLVRHLPA…HTLVVEFAKE (76 aa)) is the RRM 1 domain. Disordered stretches follow at residues 106-130 (VHSPCPTSGSEKKKRSDDPVEDDKE) and 213-254 (MPLH…DEDR). A Phosphoserine modification is found at serine 108. Over residues 115 to 130 (SEKKKRSDDPVEDDKE) the composition is skewed to basic and acidic residues. Positions 211–380 (DYMPLHAPLP…LDITEEIKED (170 aa)) are necessary for binding to m(7)G-capped U12 snRNA. Pro residues predominate over residues 217 to 230 (APLPPTSPQPPEEP). Acidic residues predominate over residues 231-252 (PLPDEDEELSSEESEYESTDDE). Residues 420–503 (CRIYVKNLAK…KPMVVQFARS (84 aa)) enclose the RRM 2 domain.

Component of the U11/U12 snRNPs that are part of the U12-type spliceosome. Found in a complex with m(7)G-capped U12 snRNA. Interacts with PDCD7. Highly expressed in pancreas and kidney. Detected at lower levels in heart, brain, placenta, lung, liver, spleen, thymus, prostate, testis, ovary, small intestine, colon and leukocytes.

The protein localises to the nucleus. In terms of biological role, participates in pre-mRNA U12-dependent splicing, performed by the minor spliceosome which removes U12-type introns. U12-type introns comprises less than 1% of all non-coding sequences. Binds to the 3'-stem-loop of m(7)G-capped U12 snRNA. The chain is RNA-binding region-containing protein 3 (RNPC3) from Homo sapiens (Human).